The sequence spans 131 residues: Small ribosomal subunit protein uS11 (131 aa).

The protein belongs to the universal ribosomal protein uS11 family. In terms of assembly, part of the 30S ribosomal subunit. Interacts with proteins S7 and S18. Binds to IF-3.

Located on the platform of the 30S subunit, it bridges several disparate RNA helices of the 16S rRNA. Forms part of the Shine-Dalgarno cleft in the 70S ribosome. The polypeptide is Small ribosomal subunit protein uS11 (Paramagnetospirillum magneticum (strain ATCC 700264 / AMB-1) (Magnetospirillum magneticum)).